The chain runs to 1107 residues: Unconventional myosin-Ib (1107 aa).

Residues 15–701 enclose the Myosin motor domain; sequence IGVGDMVLLE…TLFQLEDLRK (687 aa). Ser60 is subject to Phosphoserine. 108–115 provides a ligand contact to ATP; the sequence is GESGAGKT. A Glycyl lysine isopeptide (Lys-Gly) (interchain with G-Cter in SUMO1); alternate cross-link involves residue Lys287. Residue Lys287 forms a Glycyl lysine isopeptide (Lys-Gly) (interchain with G-Cter in SUMO2); alternate linkage. An actin-binding region spans residues 592–599; that stretch reads YIRCIKPN. IQ domains lie at 704–727, 728–749, 750–778, 780–807, and 808–837; these read LEDL…FLLM, KRSQ…RYQQ, IKSS…HQKR, KEAA…EEAR, and RKHA…ANAG. In terms of domain architecture, TH1 spans 923-1107; that stretch reads KALYPSSVGQ…NNRLLEVAVP (185 aa).

Belongs to the TRAFAC class myosin-kinesin ATPase superfamily. Myosin family. In terms of tissue distribution, prominent expression is seen in the brain, lung and liver. It is also expressed in the heart and testis. A high level expression is seen in virtually all neurons (but not glia) in the postnatal and adult mouse brain and in neuroblasts of the cerebellar external granular layer.

Its function is as follows. Motor protein that may participate in process critical to neuronal development and function such as cell migration, neurite outgrowth and vesicular transport. The polypeptide is Unconventional myosin-Ib (Myo1b) (Mus musculus (Mouse)).